Consider the following 133-residue polypeptide: Small ribosomal subunit protein uS8 (133 aa).

This sequence belongs to the universal ribosomal protein uS8 family. In terms of assembly, part of the 30S ribosomal subunit. Contacts proteins S5 and S12.

Its function is as follows. One of the primary rRNA binding proteins, it binds directly to 16S rRNA central domain where it helps coordinate assembly of the platform of the 30S subunit. This chain is Small ribosomal subunit protein uS8, found in Leptospira interrogans serogroup Icterohaemorrhagiae serovar copenhageni (strain Fiocruz L1-130).